A 335-amino-acid polypeptide reads, in one-letter code: [Citrate [pro-3S]-lyase] ligase (335 aa).

The 131-residue stretch at Met1–Ser131 folds into the N-acetyltransferase domain.

The catalysed reaction is holo-[citrate lyase ACP] + acetate + ATP = acetyl-[citrate lyase ACP] + AMP + diphosphate. Its function is as follows. Acetylation of prosthetic group (2-(5''-phosphoribosyl)-3'-dephosphocoenzyme-A) of the gamma subunit of citrate lyase. This is [Citrate [pro-3S]-lyase] ligase (citC) from Haemophilus influenzae (strain ATCC 51907 / DSM 11121 / KW20 / Rd).